The sequence spans 320 residues: Phosphatidylinositol transfer protein SFH5 (320 aa).

The CRAL-TRIO domain maps to 120–285; that stretch reads NFPNSNLKIT…VYGGKVEKSL (166 aa). Positions 134, 165, 190, 192, and 226 each coordinate heme.

Belongs to the SFH5 family. Requires heme b as cofactor.

Its subcellular location is the cytoplasm. The protein localises to the endoplasmic reticulum membrane. It localises to the microsome membrane. The catalysed reaction is a 1,2-diacyl-sn-glycero-3-phospho-(1D-myo-inositol)(in) = a 1,2-diacyl-sn-glycero-3-phospho-(1D-myo-inositol)(out). In terms of biological role, non-classical phosphatidylinositol (PtdIns) transfer protein (PITP), which exhibits PtdIns-binding/transfer activity in the absence of detectable PtdCho-binding/transfer activity. Regulates PtdIns(4,5)P2 homeostasis at the plasma membrane. Heme-binding protein that may play a role in organic oxidant-induced stress responses. The polypeptide is Phosphatidylinositol transfer protein SFH5 (SFH5) (Candida albicans (strain SC5314 / ATCC MYA-2876) (Yeast)).